Here is a 346-residue protein sequence, read N- to C-terminus: Flap endonuclease 1 (346 aa).

Residues 1–100 (MGVDIKELVE…KELERRYQIK (100 aa)) form an N-domain region. Asp-29, Asp-82, Glu-154, Glu-156, Asp-175, Asp-177, and Asp-238 together coordinate Mg(2+). The segment at 118–260 (EARIYAQQTS…KALKLVKELK (143 aa)) is I-domain. Positions 336–344 (KQQSLESWF) are interaction with PCNA.

It belongs to the XPG/RAD2 endonuclease family. FEN1 subfamily. As to quaternary structure, interacts with PCNA. PCNA stimulates the nuclease activity without altering cleavage specificity. Mg(2+) serves as cofactor.

Its function is as follows. Structure-specific nuclease with 5'-flap endonuclease and 5'-3' exonuclease activities involved in DNA replication and repair. During DNA replication, cleaves the 5'-overhanging flap structure that is generated by displacement synthesis when DNA polymerase encounters the 5'-end of a downstream Okazaki fragment. Binds the unpaired 3'-DNA end and kinks the DNA to facilitate 5' cleavage specificity. Cleaves one nucleotide into the double-stranded DNA from the junction in flap DNA, leaving a nick for ligation. Also involved in the base excision repair (BER) pathway. Acts as a genome stabilization factor that prevents flaps from equilibrating into structures that lead to duplications and deletions. Also possesses 5'-3' exonuclease activity on nicked or gapped double-stranded DNA. This is Flap endonuclease 1 from Thermofilum pendens (strain DSM 2475 / Hrk 5).